The sequence spans 488 residues: Probable glycine dehydrogenase (decarboxylating) subunit 2 (488 aa).

K274 is subject to N6-(pyridoxal phosphate)lysine.

Belongs to the GcvP family. C-terminal subunit subfamily. In terms of assembly, the glycine cleavage system is composed of four proteins: P, T, L and H. In this organism, the P 'protein' is a heterodimer of two subunits. The cofactor is pyridoxal 5'-phosphate.

It carries out the reaction N(6)-[(R)-lipoyl]-L-lysyl-[glycine-cleavage complex H protein] + glycine + H(+) = N(6)-[(R)-S(8)-aminomethyldihydrolipoyl]-L-lysyl-[glycine-cleavage complex H protein] + CO2. Its function is as follows. The glycine cleavage system catalyzes the degradation of glycine. The P protein binds the alpha-amino group of glycine through its pyridoxal phosphate cofactor; CO(2) is released and the remaining methylamine moiety is then transferred to the lipoamide cofactor of the H protein. In Listeria monocytogenes serotype 4a (strain HCC23), this protein is Probable glycine dehydrogenase (decarboxylating) subunit 2.